Reading from the N-terminus, the 257-residue chain is Adenosylcobinamide-GDP ribazoletransferase (257 aa).

Transmembrane regions (helical) follow at residues 28-48, 50-70, 110-130, and 199-219; these read FARS…LVAL, LFVP…VYAV, VALA…VEVA, and WPQV…AALV.

Belongs to the CobS family. Mg(2+) serves as cofactor.

It is found in the cell membrane. The catalysed reaction is alpha-ribazole + adenosylcob(III)inamide-GDP = adenosylcob(III)alamin + GMP + H(+). The enzyme catalyses alpha-ribazole 5'-phosphate + adenosylcob(III)inamide-GDP = adenosylcob(III)alamin 5'-phosphate + GMP + H(+). The protein operates within cofactor biosynthesis; adenosylcobalamin biosynthesis; adenosylcobalamin from cob(II)yrinate a,c-diamide: step 7/7. Joins adenosylcobinamide-GDP and alpha-ribazole to generate adenosylcobalamin (Ado-cobalamin). Also synthesizes adenosylcobalamin 5'-phosphate from adenosylcobinamide-GDP and alpha-ribazole 5'-phosphate. In Halorubrum lacusprofundi (strain ATCC 49239 / DSM 5036 / JCM 8891 / ACAM 34), this protein is Adenosylcobinamide-GDP ribazoletransferase.